The primary structure comprises 76 residues: Small ribosomal subunit protein bS21C (76 aa).

Positions 52-76 (GRQRKLARKQMQREGLLPTKPRKDK) are disordered.

The protein belongs to the bacterial ribosomal protein bS21 family.

In Agrobacterium fabrum (strain C58 / ATCC 33970) (Agrobacterium tumefaciens (strain C58)), this protein is Small ribosomal subunit protein bS21C (rpsU3).